Here is a 147-residue protein sequence, read N- to C-terminus: Hemoglobin subunit delta (147 aa).

At Val2 the chain carries N-acetylalanine; in variant Niigata. The region spanning 3–147 (HLTPEEKTAV…VANALAHKYH (145 aa)) is the Globin domain. Ser51 carries the phosphoserine modification. Heme b is bound by residues His64 and His93.

It belongs to the globin family. Heterotetramer of two alpha chains and two delta chains in adult hemoglobin A2 (HbA2). HbA2 represents less than 3.5% of adult hemoglobin. In terms of tissue distribution, red blood cells.

Functionally, involved in oxygen transport from the lung to the various peripheral tissues. The protein is Hemoglobin subunit delta (HBD) of Homo sapiens (Human).